A 502-amino-acid polypeptide reads, in one-letter code: ATP synthase subunit beta (502 aa).

G153–T160 serves as a coordination point for ATP.

The protein belongs to the ATPase alpha/beta chains family. In terms of assembly, F-type ATPases have 2 components, CF(1) - the catalytic core - and CF(0) - the membrane proton channel. CF(1) has five subunits: alpha(3), beta(3), gamma(1), delta(1), epsilon(1). CF(0) has three main subunits: a(1), b(2) and c(9-12). The alpha and beta chains form an alternating ring which encloses part of the gamma chain. CF(1) is attached to CF(0) by a central stalk formed by the gamma and epsilon chains, while a peripheral stalk is formed by the delta and b chains.

It localises to the cell membrane. It carries out the reaction ATP + H2O + 4 H(+)(in) = ADP + phosphate + 5 H(+)(out). Its function is as follows. Produces ATP from ADP in the presence of a proton gradient across the membrane. The catalytic sites are hosted primarily by the beta subunits. The protein is ATP synthase subunit beta of Amoebophilus asiaticus (strain 5a2).